The following is a 270-amino-acid chain: Putative phosphoenolpyruvate synthase regulatory protein (270 aa).

150–157 is a binding site for ADP; that stretch reads GVSRCGKT.

Belongs to the pyruvate, phosphate/water dikinase regulatory protein family. PSRP subfamily.

The catalysed reaction is [pyruvate, water dikinase] + ADP = [pyruvate, water dikinase]-phosphate + AMP + H(+). The enzyme catalyses [pyruvate, water dikinase]-phosphate + phosphate + H(+) = [pyruvate, water dikinase] + diphosphate. In terms of biological role, bifunctional serine/threonine kinase and phosphorylase involved in the regulation of the phosphoenolpyruvate synthase (PEPS) by catalyzing its phosphorylation/dephosphorylation. This is Putative phosphoenolpyruvate synthase regulatory protein from Shewanella woodyi (strain ATCC 51908 / MS32).